Reading from the N-terminus, the 63-residue chain is Large ribosomal subunit protein bL28 (63 aa).

Belongs to the bacterial ribosomal protein bL28 family.

The sequence is that of Large ribosomal subunit protein bL28 from Clostridium acetobutylicum (strain ATCC 824 / DSM 792 / JCM 1419 / IAM 19013 / LMG 5710 / NBRC 13948 / NRRL B-527 / VKM B-1787 / 2291 / W).